The following is a 70-amino-acid chain: Large ribosomal subunit protein bL31 (70 aa).

Zn(2+) contacts are provided by Cys16, Cys18, Cys37, and Cys40.

Belongs to the bacterial ribosomal protein bL31 family. Type A subfamily. In terms of assembly, part of the 50S ribosomal subunit. Zn(2+) serves as cofactor.

Binds the 23S rRNA. The protein is Large ribosomal subunit protein bL31 of Saccharophagus degradans (strain 2-40 / ATCC 43961 / DSM 17024).